Consider the following 147-residue polypeptide: Globin (147 aa).

One can recognise a Globin domain in the interval 1-147 (GLDGAQKTAL…LLTMLIKAHV (147 aa)). Positions 66 and 98 each coordinate heme b.

Belongs to the globin family. Homodimer.

It is found in the cytoplasm. This chain is Globin, found in Busycotypus canaliculatus (Channeled whelk).